Here is a 59-residue protein sequence, read N- to C-terminus: Metallothionein-1B (59 aa).

The tract at residues 1–29 (MPGPCCNDKCVCQEGGCKAGCQCTSCRCS) is beta. Residues Cys5, Cys6, Cys10, Cys17, Cys21, Cys23, Cys26, Cys28, Cys31, Cys34, Cys38, Cys40, Cys46, Cys50, Cys54, Cys56, and Cys57 each coordinate a divalent metal cation. The alpha stretch occupies residues 30–59 (PCQKCTSGCKCATKEECSKTCTKPCSCCPK).

The protein belongs to the metallothionein superfamily. Type 3 family.

Functionally, binds six divalent metal ions. Known to bind copper and cadmium. This chain is Metallothionein-1B, found in Callinectes sapidus (Blue crab).